Reading from the N-terminus, the 209-residue chain is tRNA (guanine-N(7)-)-methyltransferase (209 aa).

D35, E60, N87, and D113 together coordinate S-adenosyl-L-methionine. D113 is a catalytic residue. K117 and D149 together coordinate substrate.

Belongs to the class I-like SAM-binding methyltransferase superfamily. TrmB family.

It catalyses the reaction guanosine(46) in tRNA + S-adenosyl-L-methionine = N(7)-methylguanosine(46) in tRNA + S-adenosyl-L-homocysteine. It participates in tRNA modification; N(7)-methylguanine-tRNA biosynthesis. Functionally, catalyzes the formation of N(7)-methylguanine at position 46 (m7G46) in tRNA. The protein is tRNA (guanine-N(7)-)-methyltransferase of Prochlorococcus marinus (strain MIT 9515).